An 89-amino-acid chain; its full sequence is Small ribosomal subunit protein uS17 (89 aa).

Belongs to the universal ribosomal protein uS17 family. As to quaternary structure, part of the 30S ribosomal subunit.

One of the primary rRNA binding proteins, it binds specifically to the 5'-end of 16S ribosomal RNA. The protein is Small ribosomal subunit protein uS17 of Xanthomonas axonopodis pv. citri (strain 306).